The chain runs to 153 residues: MAKLKYKVEADPKNTARAMGRTLRISRKHAIELCRELSGMKLDAAVAYLNRVIALETPVPFKVHNKDLPHRKGKIGTHSGRFPQKASLEILNVLDNAKKNAEQKGLNTEKLRIKHISSNRGFTIKRYMPRAFGRASPKNQETIHIQVILEEFY.

This sequence belongs to the universal ribosomal protein uL22 family. In terms of assembly, part of the 50S ribosomal subunit.

Its function is as follows. This protein binds specifically to 23S rRNA. It makes multiple contacts with different domains of the 23S rRNA in the assembled 50S subunit and ribosome. Functionally, the globular domain of the protein is located near the polypeptide exit tunnel on the outside of the subunit, while an extended beta-hairpin is found that lines the wall of the exit tunnel in the center of the 70S ribosome. The polypeptide is Large ribosomal subunit protein uL22 (Methanococcus maripaludis (strain DSM 14266 / JCM 13030 / NBRC 101832 / S2 / LL)).